An 878-amino-acid chain; its full sequence is Protein daughter of sevenless (878 aa).

The PH domain occupies 3-113 (RTFYEGWLIK…WVNCICQVCH (111 aa)). Positions 132–176 (ENRTQHTSSSGGLSNSTQNTTTTSLHSSAGTTAPQASVPNAGGSA) are disordered. Residues 136–159 (QHTSSSGGLSNSTQNTTTTSLHSS) show a composition bias toward low complexity. The span at 160–169 (AGTTAPQASV) shows a compositional bias: polar residues. A coiled-coil region spans residues 246-275 (ALIQAQAAAAAAEQLQQQQQQAARLAVSAN). The disordered stretch occupies residues 391 to 437 (NNNASKQRSDSDSESVFTDDDEWAHPLPLRENVDRSTRPSDSSIENE). The residue at position 399 (Ser-399) is a Phosphoserine. Residue Thr-481 is modified to Phosphothreonine. 2 interaction with DRK regions span residues 638-650 (DCPP…KPKV) and 690-702 (GPPS…KPNA). Disordered stretches follow at residues 686–721 (QQPI…SSGA) and 749–773 (LPRQ…RTAS). 2 stretches are compositionally biased toward polar residues: residues 707–718 (NSATMSPATRRS) and 760–770 (SPGSMSVQHQR). The residue at position 771 (Thr-771) is a Phosphothreonine. Tyr-801 and Tyr-854 each carry phosphotyrosine.

As to quaternary structure, interacts with DRK. Phosphorylated on Tyr-801 and Tyr-854 in response to sevenless activation, which initiates the recruitment of the phosphatase CSW.

It is found in the cytoplasm. Its subcellular location is the membrane. Essential component for signaling from various receptor tyrosine kinases such as Sevenless, TORSO and DER. Required for photoreceptor cell and wing development. The protein is Protein daughter of sevenless (dos) of Drosophila melanogaster (Fruit fly).